A 255-amino-acid polypeptide reads, in one-letter code: Phosphate import ATP-binding protein PstB (255 aa).

The 242-residue stretch at 9-250 (IAVQNLNFYY…PKIQRTEDYI (242 aa)) folds into the ABC transporter domain. 41–48 (GPSGCGKS) is an ATP binding site.

Belongs to the ABC transporter superfamily. Phosphate importer (TC 3.A.1.7) family. In terms of assembly, the complex is composed of two ATP-binding proteins (PstB), two transmembrane proteins (PstC and PstA) and a solute-binding protein (PstS).

The protein localises to the cell inner membrane. It catalyses the reaction phosphate(out) + ATP + H2O = ADP + 2 phosphate(in) + H(+). Functionally, part of the ABC transporter complex PstSACB involved in phosphate import. Responsible for energy coupling to the transport system. In Haemophilus influenzae (strain 86-028NP), this protein is Phosphate import ATP-binding protein PstB.